The sequence spans 717 residues: uncharacterized protein (717 aa).

This sequence belongs to the asfivirus C717R family.

The protein localises to the virion. This is an uncharacterized protein from African swine fever virus (strain Badajoz 1971 Vero-adapted) (Ba71V).